A 213-amino-acid polypeptide reads, in one-letter code: Probable transaldolase (213 aa).

Lys83 serves as the catalytic Schiff-base intermediate with substrate.

Belongs to the transaldolase family. Type 3B subfamily.

The protein localises to the cytoplasm. It catalyses the reaction D-sedoheptulose 7-phosphate + D-glyceraldehyde 3-phosphate = D-erythrose 4-phosphate + beta-D-fructose 6-phosphate. It functions in the pathway carbohydrate degradation; pentose phosphate pathway; D-glyceraldehyde 3-phosphate and beta-D-fructose 6-phosphate from D-ribose 5-phosphate and D-xylulose 5-phosphate (non-oxidative stage): step 2/3. Transaldolase is important for the balance of metabolites in the pentose-phosphate pathway. This is Probable transaldolase from Desulfitobacterium hafniense (strain DSM 10664 / DCB-2).